Here is a 197-residue protein sequence, read N- to C-terminus: Holliday junction branch migration complex subunit RuvA (197 aa).

The interval 1 to 63 is domain I; sequence MYAYLKGIIT…EDAHLLYGFR (63 aa). The domain II stretch occupies residues 64–142; it reads SEDEKKLFLS…VAGDDLPAKV (79 aa). The segment at 143-147 is flexible linker; sequence AVQAS. Residues 148–197 are domain III; that stretch reads AENQELEEAMEAMLALGYKATELKKIKKFFEGTTDTAENYIKSALKMLVK.

This sequence belongs to the RuvA family. Homotetramer. Forms an RuvA(8)-RuvB(12)-Holliday junction (HJ) complex. HJ DNA is sandwiched between 2 RuvA tetramers; dsDNA enters through RuvA and exits via RuvB. An RuvB hexamer assembles on each DNA strand where it exits the tetramer. Each RuvB hexamer is contacted by two RuvA subunits (via domain III) on 2 adjacent RuvB subunits; this complex drives branch migration. In the full resolvosome a probable DNA-RuvA(4)-RuvB(12)-RuvC(2) complex forms which resolves the HJ.

It is found in the cytoplasm. The RuvA-RuvB-RuvC complex processes Holliday junction (HJ) DNA during genetic recombination and DNA repair, while the RuvA-RuvB complex plays an important role in the rescue of blocked DNA replication forks via replication fork reversal (RFR). RuvA specifically binds to HJ cruciform DNA, conferring on it an open structure. The RuvB hexamer acts as an ATP-dependent pump, pulling dsDNA into and through the RuvAB complex. HJ branch migration allows RuvC to scan DNA until it finds its consensus sequence, where it cleaves and resolves the cruciform DNA. The polypeptide is Holliday junction branch migration complex subunit RuvA (Streptococcus pneumoniae (strain Hungary19A-6)).